Consider the following 35-residue polypeptide: GACRWFLGGCKSTSDCCEHLSCKMGLDYCAWDGTF.

3 cysteine pairs are disulfide-bonded: C3–C17, C10–C22, and C16–C29. F35 is modified (phenylalanine amide).

This sequence belongs to the neurotoxin 10 (Hwtx-1) family. 62 (Vatx) subfamily. Expressed by the venom gland.

Its subcellular location is the secreted. In terms of biological role, selectively activates the mammalian capsaicin receptor TRPV1, a non-selective cation channel expressed by sensory neurons of the pain pathway. Is more potent than VaTx1, but less potent than VaTx3. Interacts with distinct regions of the channel than capsaicin, since it only acts on the extracellular face of the channel, and capsaicin binds to the cytosolic side. Also activates avian TRPV1, which is insensitive to capsaicin. Produce weak inhibition on potassium channels Kv2.1/KCNB1. The sequence is that of Tau-theraphotoxin-Pc1b from Psalmopoeus cambridgei (Trinidad chevron tarantula).